The sequence spans 393 residues: Protein TsgA (393 aa).

12 helical membrane passes run 11 to 31 (WISF…GMVM), 51 to 71 (FLNA…EIIP), 78 to 98 (FGFI…SLAL), 101 to 121 (AAMF…TFLI), 134 to 154 (LLFT…VAAF), 162 to 182 (WYWV…LTFG), 206 to 226 (IGVL…LGFI), 245 to 265 (ALVS…SFIL), 273 to 293 (ILTV…TGTQ), 298 to 318 (WFIL…ITLG), 332 to 352 (FILT…GPIV), and 361 to 381 (LLTA…LGFV).

This sequence belongs to the major facilitator superfamily. TsgA family.

It is found in the cell inner membrane. This chain is Protein TsgA, found in Salmonella agona (strain SL483).